The primary structure comprises 131 residues: Profilin-1 (131 aa).

It belongs to the profilin family. In terms of assembly, occurs in many kinds of cells as a complex with monomeric actin in a 1:1 ratio. Expressed at low levels roots, leaves, stems, flowers and siliques. Expressed in leaf epidermal cells, trichomes and stem epidermal cells. Detected in phloem exudates (at protein level).

It localises to the cytoplasm. It is found in the cytoskeleton. In terms of biological role, binds to actin monomers and regulates the organization of the actin cytoskeleton. At high concentrations, profilin prevents the polymerization of actin, whereas it enhances it at low concentrations. At low concentrations, associates with the poly-proline motif of formins to enhance actin filament elongation rate. Binds ACT1, ACT7 and ACT11 and inhibits actin polymerization. Coordinates the stochastic dynamic properties of actin filaments by modulating formin-mediated actin nucleation and assembly during axial cell expansion. Binds G-actin and poly-L-proline in vitro. Inhibits cell growth of various pathogenic fungal strains. May play a role as antifungal proteins in the defense system against fungal pathogen attacks. This chain is Profilin-1, found in Arabidopsis thaliana (Mouse-ear cress).